A 109-amino-acid chain; its full sequence is Iron-sulfur cluster assembly protein CyaY (109 aa).

It belongs to the frataxin family.

Its function is as follows. Involved in iron-sulfur (Fe-S) cluster assembly. May act as a regulator of Fe-S biogenesis. The protein is Iron-sulfur cluster assembly protein CyaY of Albidiferax ferrireducens (strain ATCC BAA-621 / DSM 15236 / T118) (Rhodoferax ferrireducens).